We begin with the raw amino-acid sequence, 1883 residues long: Lysophospholipase NTE1 (1883 aa).

The Cytoplasmic segment spans residues M1–N75. A helical transmembrane segment spans residues L76–L96. The Lumenal portion of the chain corresponds to H97–Q103. A helical membrane pass occupies residues L104–L124. At R125–I1883 the chain is on the cytoplasmic side. 6 disordered regions span residues H284–P327, E355–A410, S618–P693, S716–S764, E921–S1069, and L1084–S1108. Residues N311 to P327 are compositionally biased toward polar residues. Positions A372–T383 are enriched in low complexity. A compositionally biased stretch (polar residues) spans P650–I668. Residues A863 to I1158 and R1166 to R1285 contribute to the a nucleoside 3',5'-cyclic phosphate site. A compositionally biased stretch (polar residues) spans T936–P948. The span at L964–D974 shows a compositional bias: basic and acidic residues. Composition is skewed to polar residues over residues I988–S998 and L1084–Q1100. The PNPLA domain maps to L1544 to L1708. Positions G1548–G1553 match the GXGXXG motif. Positions G1575–G1579 match the GXSXG motif. S1577 (nucleophile) is an active-site residue. Catalysis depends on D1695, which acts as the Proton acceptor. The short motif at D1695–G1697 is the DGA/G element. The disordered stretch occupies residues D1852–I1883. Positions R1861–A1874 are enriched in basic residues.

The protein belongs to the NTE family.

Its subcellular location is the endoplasmic reticulum membrane. It catalyses the reaction a 1-acyl-sn-glycero-3-phosphocholine + H2O = sn-glycerol 3-phosphocholine + a fatty acid + H(+). Its activity is regulated as follows. Inhibited by organophosphorus esters. Functionally, intracellular phospholipase B that catalyzes the double deacylation of phosphatidylcholine (PC) to glycerophosphocholine (GroPCho). Plays an important role in membrane lipid homeostasis. Responsible for the rapid PC turnover in response to inositol, elevated temperatures, or when choline is present in the growth medium. In Mycosarcoma maydis (Corn smut fungus), this protein is Lysophospholipase NTE1 (NTE1).